Consider the following 62-residue polypeptide: SPbeta prophage-derived uncharacterized protein YonU (62 aa).

The stretch at Met1–Arg32 forms a coiled coil.

In Bacillus subtilis (strain 168), this protein is SPbeta prophage-derived uncharacterized protein YonU (yonU).